Consider the following 544-residue polypeptide: Serine/threonine-protein kinase PAK 1 (544 aa).

Positions methionine 1 to serine 79 are disordered. Serine 2 carries the post-translational modification N-acetylserine. Phosphoserine; by PKB and autocatalysis is present on serine 21. Serine 57 bears the Phosphoserine; by autocatalysis mark. Residues lysine 68–serine 79 are compositionally biased toward basic and acidic residues. Positions lysine 70–glutamine 140 are autoregulatory region. Residues isoleucine 75–glycine 88 form the CRIB domain. The GTPase-binding stretch occupies residues isoleucine 75 to arginine 105. Threonine 84 is modified (phosphothreonine; by OXSR1). Residue serine 115 is modified to Phosphoserine. Phosphotyrosine occurs at positions 131 and 142. Residues serine 144 and serine 149 each carry the phosphoserine; by autocatalysis modification. The segment covering alanine 150–glutamate 166 has biased composition (polar residues). A disordered region spans residues alanine 150 to histidine 195. Residue tyrosine 153 is modified to Phosphotyrosine; by JAK2. The residue at position 174 (serine 174) is a Phosphoserine. Acidic residues predominate over residues serine 174–alanine 183. Phosphothreonine is present on threonine 184. Serine 198 bears the Phosphoserine; by autocatalysis mark. A Phosphotyrosine; by JAK2 modification is found at tyrosine 200. Serine 203 is subject to Phosphoserine; by autocatalysis. Residues proline 209–glutamate 250 form a disordered region. Phosphothreonine occurs at positions 211 and 218. Residues serine 219 and serine 222 each carry the phosphoserine modification. The span at serine 219–proline 230 shows a compositional bias: polar residues. A phosphothreonine mark is found at threonine 224, threonine 228, and threonine 229. Residues tyrosine 269–leucine 520 enclose the Protein kinase domain. Residue isoleucine 275–valine 283 coordinates ATP. Residue tyrosine 284 is modified to Phosphotyrosine; by JAK2. Lysine 298 contributes to the ATP binding site. Aspartate 388 functions as the Proton acceptor in the catalytic mechanism. Threonine 422 is modified (phosphothreonine; by autocatalysis, BRSK2 and PDPK1).

This sequence belongs to the protein kinase superfamily. STE Ser/Thr protein kinase family. STE20 subfamily. In terms of assembly, homodimer in its autoinhibited state. Active as monomer. Interacts with GIT1. Component of cytoplasmic complexes, which also contains PXN, ARHGEF7 and GIT1. Interacts with NISCH. Interacts with DVL1; mediates the formation of a DVL1, MUSK and PAK1 ternary complex involved in AChR clustering. Binds to the caspase-cleaved p110 isoform of CDC2L1 and CDC2L2, p110C, but not the full-length proteins. Interacts with ARHGEF7. Interacts with SCRIB. Interacts with PDPK1. Interacts (via kinase domain) with RAF1. Interacts with NCK1 and NCK2. Interacts with TBCB. Interacts with BRSK2. Interacts tightly with GTP-bound but not GDP-bound CDC42/P21 and RAC1. Interacts with SNAI1. Interacts with CIB1 (via N-terminal region); the interaction is direct, promotes PAK1 activity and occurs in a calcium-dependent manner. Interacts with INPP5K. Interacts with gamma-tubulin. Interacts with RHOU; the interaction promotes PAK1 activation. Mg(2+) serves as cofactor. In terms of processing, autophosphorylated in trans, meaning that in a dimer, one kinase molecule phosphorylates the other one. Activated by autophosphorylation at Thr-422 in response to a conformation change, triggered by interaction with GTP-bound CDC42 or RAC1. Activated by phosphorylation at Thr-422 by PDPK1. Phosphorylated by JAK2 in response to PRL; this increases PAK1 kinase activity. Phosphorylated at Ser-21 by PKB/AKT; this reduces interaction with NCK1 and association with focal adhesion sites. Activated by phosphorylation at Thr-422 by BRSK2. Upon DNA damage, phosphorylated at Thr-211 and translocates to the nucleoplasm. Phosphorylated at tyrosine residues, which can be enhanced by NTN1. Expressed predominantly in the brain, with higher expression in neuronal groups associated with motor function, and at lower levels in the spleen.

It localises to the cytoplasm. Its subcellular location is the cell junction. It is found in the focal adhesion. The protein localises to the cell projection. The protein resides in the lamellipodium. It localises to the cell membrane. Its subcellular location is the ruffle membrane. It is found in the invadopodium. The protein localises to the nucleus. The protein resides in the nucleoplasm. It localises to the chromosome. Its subcellular location is the cytoskeleton. It is found in the microtubule organizing center. The protein localises to the centrosome. The enzyme catalyses L-seryl-[protein] + ATP = O-phospho-L-seryl-[protein] + ADP + H(+). It carries out the reaction L-threonyl-[protein] + ATP = O-phospho-L-threonyl-[protein] + ADP + H(+). Its activity is regulated as follows. Phosphorylation of Thr-84 by OXSR1 inhibits activation. Activated by binding small G proteins. Binding of GTP-bound CDC42 or RAC1 to the autoregulatory region releases monomers from the autoinhibited dimer, and enables activation by phosphorylation of Thr-422. Protein kinase involved in intracellular signaling pathways downstream of integrins and receptor-type kinases that plays an important role in cytoskeleton dynamics, in cell adhesion, migration, proliferation, apoptosis, mitosis, and in vesicle-mediated transport processes. Can directly phosphorylate BAD and protects cells against apoptosis. Activated by interaction with CDC42 and RAC1. Functions as a GTPase effector that links the Rho-related GTPases CDC42 and RAC1 to the JNK MAP kinase pathway. Phosphorylates and activates MAP2K1, and thereby mediates activation of downstream MAP kinases. Involved in the reorganization of the actin cytoskeleton, actin stress fibers and of focal adhesion complexes. Phosphorylates the tubulin chaperone TBCB and thereby plays a role in the regulation of microtubule biogenesis and organization of the tubulin cytoskeleton. Plays a role in the regulation of insulin secretion in response to elevated glucose levels. Part of a ternary complex that contains PAK1, DVL1 and MUSK that is important for MUSK-dependent regulation of AChR clustering during the formation of the neuromuscular junction (NMJ). Activity is inhibited in cells undergoing apoptosis, potentially due to binding of CDC2L1 and CDC2L2. Phosphorylates MYL9/MLC2. Phosphorylates RAF1 at 'Ser-338' and 'Ser-339' resulting in: activation of RAF1, stimulation of RAF1 translocation to mitochondria, phosphorylation of BAD by RAF1, and RAF1 binding to BCL2. Phosphorylates SNAI1 at 'Ser-246' promoting its transcriptional repressor activity by increasing its accumulation in the nucleus. In podocytes, promotes NR3C2 nuclear localization. Required for atypical chemokine receptor ACKR2-induced phosphorylation of LIMK1 and cofilin (CFL1) and for the up-regulation of ACKR2 from endosomal compartment to cell membrane, increasing its efficiency in chemokine uptake and degradation. In synapses, seems to mediate the regulation of F-actin cluster formation performed by SHANK3, maybe through CFL1 phosphorylation and inactivation. Plays a role in RUFY3-mediated facilitating gastric cancer cells migration and invasion. In response to DNA damage, phosphorylates MORC2 which activates its ATPase activity and facilitates chromatin remodeling. In neurons, plays a crucial role in regulating GABA(A) receptor synaptic stability and hence GABAergic inhibitory synaptic transmission through its role in F-actin stabilization. In hippocampal neurons, necessary for the formation of dendritic spines and excitatory synapses; this function is dependent on kinase activity and may be exerted by the regulation of actomyosin contractility through the phosphorylation of myosin II regulatory light chain (MLC). Along with GIT1, positively regulates microtubule nucleation during interphase. Phosphorylates FXR1, promoting its localization to stress granules and activity. Phosphorylates ILK on 'Thr-173' and 'Ser-246', promoting nuclear export of ILK. This chain is Serine/threonine-protein kinase PAK 1, found in Rattus norvegicus (Rat).